The sequence spans 167 residues: 3-dehydroquinate dehydratase (167 aa).

The active-site Proton acceptor is Tyr-22. Substrate contacts are provided by Asn-76, His-82, and Asp-89. Catalysis depends on His-102, which acts as the Proton donor. Substrate contacts are provided by residues 103–104 and Arg-113; that span reads LT.

Belongs to the type-II 3-dehydroquinase family. In terms of assembly, homododecamer.

The enzyme catalyses 3-dehydroquinate = 3-dehydroshikimate + H2O. The protein operates within metabolic intermediate biosynthesis; chorismate biosynthesis; chorismate from D-erythrose 4-phosphate and phosphoenolpyruvate: step 3/7. Its function is as follows. Catalyzes a trans-dehydration via an enolate intermediate. In Helicobacter pylori (strain P12), this protein is 3-dehydroquinate dehydratase.